Here is a 374-residue protein sequence, read N- to C-terminus: Methionine import ATP-binding protein MetN 2 (374 aa).

Positions 1-22 (MSVATLQRKLPEAAPRRAGQTE) are disordered. Positions 32-271 (VRFIGLGKTY…PQHEVSKTLL (240 aa)) constitute an ABC transporter domain. Residue 68–75 (GRSGAGKS) participates in ATP binding.

The protein belongs to the ABC transporter superfamily. Methionine importer (TC 3.A.1.24) family. In terms of assembly, the complex is composed of two ATP-binding proteins (MetN), two transmembrane proteins (MetI) and a solute-binding protein (MetQ).

Its subcellular location is the cell inner membrane. The enzyme catalyses L-methionine(out) + ATP + H2O = L-methionine(in) + ADP + phosphate + H(+). The catalysed reaction is D-methionine(out) + ATP + H2O = D-methionine(in) + ADP + phosphate + H(+). Functionally, part of the ABC transporter complex MetNIQ involved in methionine import. Responsible for energy coupling to the transport system. The chain is Methionine import ATP-binding protein MetN 2 from Pseudomonas fluorescens (strain ATCC BAA-477 / NRRL B-23932 / Pf-5).